The chain runs to 180 residues: Type IV major pilin protein PilE1 (180 aa).

Positions 1–7 (MNTLQKG) are excised as a propeptide. F8 carries the post-translational modification N-methylphenylalanine. A helical membrane pass occupies residues 8–28 (FTLIELMIVIAIVGILAAVAL). O-linked (GlcNAc...) serine glycosylation occurs at S70. The cysteines at positions 128 and 160 are disulfide-linked.

The protein belongs to the N-Me-Phe pilin family. As to quaternary structure, the pili are polar flexible filaments of about 5.4 nanometers diameter and 2.5 micrometers average length; they consist of only a single polypeptide chain arranged in a helical configuration of five subunits per turn in the assembled pilus.

It localises to the fimbrium. Its subcellular location is the membrane. In terms of biological role, major component of the type IV pilus (T4P) that plays a role in cellular adherence, microcolony formation, resistance to neutrophil mediated killing, twitching motility as well as transformation. Mediates the attachment and the formation of bacterial microcolonies on host epithelial cells. Mechanistically, pili retractation induces host NF-kappa-B activation in infected cells, which is temporally associated with the formation of gonococcal microcolonies. This chain is Type IV major pilin protein PilE1 (pilE1), found in Neisseria gonorrhoeae.